Reading from the N-terminus, the 335-residue chain is Expansin-like protein 3 (335 aa).

The first 20 residues, 1 to 20 (MKFNTIFLVLSIVKFILISA), serve as a signal peptide directing secretion. The Extracellular portion of the chain corresponds to 21–314 (QSCPFSQSII…LNENENIESN (294 aa)). One can recognise an Expansin-like EG45 domain in the interval 43 to 143 (AGNCGFEKLN…VKVPCEVSGN (101 aa)). Disulfide bonds link Cys-46-Cys-76 and Cys-79-Cys-138. N-linked (GlcNAc...) asparagine glycosylation occurs at Asn-87. A disordered region spans residues 247 to 276 (YKPQTFNSQQTSNNQNSNTQTPTKQPSPNS). A compositionally biased stretch (low complexity) spans 249 to 272 (PQTFNSQQTSNNQNSNTQTPTKQP). A helical transmembrane segment spans residues 315–335 (SLKLLPNFLLLILIILLNINF).

The protein belongs to the expansin family. Expansin A subfamily.

The protein localises to the membrane. Functionally, may serve to lubricate the movement of the cellulose microfibrils during cell growth and wall extension and/or may serve to maintain the fluid state of the slug cell wall. The sequence is that of Expansin-like protein 3 (expl3) from Dictyostelium discoideum (Social amoeba).